The primary structure comprises 338 residues: MTTESIFITTLPMDFNSQFDNITIGLNDNETLCENWREIHHLVFHLANTCFAAGLVIPSTLNLHMLFLRGMLCLGCTFFIIWAVLFRCALDIMIWNATFLSINFMHFVYLVYKKRPIKIKKELKGIYHRMFEPLHVSPELFNRLTGQFCEIKTLAKGQTYAVEDKTSVDDRLSILLKGIMKVSYRGHFLHTISANAYIDSPEFRSTEMNRGETFQVTITADDNCVFLCWSRERLTYFLESEPFLYEIFKYLIGKDITTKLYSLNDPTLGKKRKLDTQPSLCSQLSVMEMRNSLASTNDNEDGLQNFLRGTSTTSSQRNKQQEFYNAYGVGPLSHAVFC.

The Extracellular portion of the chain corresponds to 1 to 40 (MTTESIFITTLPMDFNSQFDNITIGLNDNETLCENWREIH). N-linked (GlcNAc...) asparagine glycans are attached at residues asparagine 21 and asparagine 29. Residues 41 to 61 (HLVFHLANTCFAAGLVIPSTL) traverse the membrane as a helical segment. At 62-65 (NLHM) the chain is on the cytoplasmic side. A helical transmembrane segment spans residues 66 to 86 (LFLRGMLCLGCTFFIIWAVLF). Over 87-91 (RCALD) the chain is Extracellular. A helical transmembrane segment spans residues 92–112 (IMIWNATFLSINFMHFVYLVY). Residues 113–338 (KKRPIKIKKE…VGPLSHAVFC (226 aa)) are Cytoplasmic-facing. Residues 296–317 (TNDNEDGLQNFLRGTSTTSSQR) form a disordered region. Positions 307–317 (LRGTSTTSSQR) are enriched in polar residues.

The protein belongs to the popeye family. Expressed in the heart.

The protein localises to the lateral cell membrane. The protein resides in the cell junction. Its subcellular location is the tight junction. It localises to the membrane. Cell adhesion molecule involved in the establishment and/or maintenance of cell integrity. Plays a role in vamp3-mediated vesicular transport and recycling of different receptor molecules. May be involved in the formation and regulation of the tight junction (TJ) paracellular permeability barrier in epithelial cells. May induce primordial adhesive contact and aggregation of epithelial cells in a Ca(2+)-independent manner. May be involved in epithelial movement during corneal sheet formation and regeneration. May play a role in the regulation of cell shape and movement by modulating the Rho-GTPase activity. May also be involved in striated muscle regeneration and in the regulation of cell spreading. This is Popeye domain-containing protein 1-A (popdc1-a) from Xenopus laevis (African clawed frog).